We begin with the raw amino-acid sequence, 297 residues long: Rhomboid-type serine protease 2 (297 aa).

A run of 6 helical transmembrane segments spans residues 14–34 (IQHP…IFLL), 60–80 (ISFY…LVAL), 98–118 (IVLN…SIGF), 120–140 (PDEA…YWAI), 155–175 (LVVP…IVIP), and 179–199 (FIGH…YLDV). The Nucleophile role is filled by serine 128. Histidine 182 is a catalytic residue. Positions 268 to 297 (DLEAGTRSRGNSSVDPTTSFPGTGQTLGTQ) are disordered. The segment covering 275–297 (SRGNSSVDPTTSFPGTGQTLGTQ) has biased composition (polar residues).

This sequence belongs to the peptidase S54 family.

The protein localises to the golgi apparatus membrane. Its subcellular location is the golgi apparatus. It localises to the cis-Golgi network membrane. It carries out the reaction Cleaves type-1 transmembrane domains using a catalytic dyad composed of serine and histidine that are contributed by different transmembrane domains.. In terms of biological role, probable rhomboid-type serine protease that catalyzes intramembrane proteolysis. This chain is Rhomboid-type serine protease 2 (RBD2), found in Yarrowia lipolytica (strain CLIB 122 / E 150) (Yeast).